Consider the following 450-residue polypeptide: tRNA-2-methylthio-N(6)-dimethylallyladenosine synthase (450 aa).

The region spanning 8–124 is the MTTase N-terminal domain; that stretch reads RTLHITTWGC…LPELIAEIEA (117 aa). [4Fe-4S] cluster is bound by residues cysteine 17, cysteine 52, cysteine 87, cysteine 162, cysteine 166, and cysteine 169. Residues 148 to 380 enclose the Radical SAM core domain; the sequence is ASQGPIAFLA…QAVLRDQQHA (233 aa). In terms of domain architecture, TRAM spans 383–445; sequence RAQVGRSFEV…PNSLMASLTQ (63 aa).

This sequence belongs to the methylthiotransferase family. MiaB subfamily. In terms of assembly, monomer. Requires [4Fe-4S] cluster as cofactor.

It localises to the cytoplasm. It catalyses the reaction N(6)-dimethylallyladenosine(37) in tRNA + (sulfur carrier)-SH + AH2 + 2 S-adenosyl-L-methionine = 2-methylsulfanyl-N(6)-dimethylallyladenosine(37) in tRNA + (sulfur carrier)-H + 5'-deoxyadenosine + L-methionine + A + S-adenosyl-L-homocysteine + 2 H(+). In terms of biological role, catalyzes the methylthiolation of N6-(dimethylallyl)adenosine (i(6)A), leading to the formation of 2-methylthio-N6-(dimethylallyl)adenosine (ms(2)i(6)A) at position 37 in tRNAs that read codons beginning with uridine. This chain is tRNA-2-methylthio-N(6)-dimethylallyladenosine synthase, found in Acidiphilium cryptum (strain JF-5).